A 1327-amino-acid chain; its full sequence is MRESFASLLATGAGKLALSLLFAATPFTSAYTFNQVPSPNLDISNLGRIAFAGDFDSISLYEYEGQTQETPSRNGTLLSRYPNGVFASINTTDADIKAMCNLRINDTERIVFAGNFTGVGNMPTPGGIALLNTTDGRVRALDGLDGTVNTLYCDKSGGQVYVGGLFNGLNSSNAIIWKDGWQELDFNGFNGAVHSIAQAAGGNIIFGGEFTGIGRGNASVASENATQIIPISSANISAQTNSGLPGFTDPKVIACKSDYSSGGAGQTWLLANNAPGFWKADFGFGFEPTRLKMYNTDFEGRGTKTFRFTALPDGGIMNMSYVDPSNGRTAYCDARCPLPQGNKTAQDFTFVNVVGMNSFRVDISEWYGSGAGLNGIQLFQDAMFSYAVNDFNEAQNCGASGTLSKASSTGNWQVSPSHNSNSQYLTTVLQGDPIRPDAASVTFSPDIKQSGNYSVTIYTPGCQGDGTCGSRGRVNVTATIGQGQSEEAILWQTNNFDKYDEVYNGYIDAAGGFQPSVILRPASGQGPGPLTVVAQRVRFTLLKATSGNINGLFEYKPGEKLDENNLADSVINAAGASLDPRGKALITSVSSSGQNLYVAGNFSNNDGRNNIFSFKQGASDPTALPNRGLNRQVMTLYQNDSMLYVGGNFTNTGEGNVQGLNGVAALVNDKWQPLGAGVNGVVLYLVPFSLNVTANQPEQVLAVSGFFDSVNEFNGNPSTNVQDFAVWVPSRSNWLHNLDFFTLAMSGRLMTFADVPGGERWFGGSVSSGSLLASGTAELNNGDDALSLEAFPVNLQAQQSGEAGVPSRKRAILEGQDMSTTGVRTGKFHTEGNNNMTILAGHFSTTGTDQQNITNLVIVDGGDSDKITGFSDELDANSTFTALAVTSNNILFAGGMVTGRLDNSRVAGLVTYDLTAKRFTPVQPPPLQGPNITVNAIAPRPNSNDVFVAGQFLTAGSLGCAAVCIWNTERNQWNSPGNSLSGVVSSLTWISDTQMYISGNLTSGDNVTTILSFNPSNNQFTAIPGAINLPGPVNALTIANEDGSQFWAAGQGSDGTAYLQRYNGEQQWMPVDSALFGPGTDIRGIQVIQVSENHESSDLISDNEDLLLMGQIQIPNFGTVSAALFNGTNLVPFLLATKGADGQTTDGSLSSIFVEFPAFFSQQNGKHLALWAIVLIGLAIALVLTFLLVVAGILLEWYRNKAKGYSPAPQSYPDRMGNVGRLPPEQLFGTLSVPRSRPTNYLFTCTALCIGMDVPTIHRRCNPVAHHKQLPAWTEQVRTEQTTETRPAINEDGCGTSIGGLLFRLPFSRARRISGDDVFDTILACSS.

Positions 1–30 are cleaved as a signal peptide; sequence MRESFASLLATGAGKLALSLLFAATPFTSA. Over 31 to 1169 the chain is Extracellular; sequence YTFNQVPSPN…FSQQNGKHLA (1139 aa). Asparagine 74, asparagine 90, asparagine 105, asparagine 115, asparagine 132, asparagine 170, asparagine 217, asparagine 224, asparagine 235, asparagine 318, asparagine 342, asparagine 452, asparagine 475, asparagine 601, asparagine 639, asparagine 648, and asparagine 691 each carry an N-linked (GlcNAc...) asparagine glycan. The Kelch 1 repeat unit spans residues 595–641; sequence NLYVAGNFSNNDGRNNIFSFKQGASDPTALPNRGLNRQVMTLYQNDS. Residues 699-754 form a Kelch 2 repeat; that stretch reads QVLAVSGFFDSVNEFNGNPSTNVQDFAVWVPSRSNWLHNLDFFTLAMSGRLMTFAD. Asparagine 835, asparagine 852, asparagine 877, and asparagine 931 each carry an N-linked (GlcNAc...) asparagine glycan. 2 Kelch repeats span residues 945–993 and 994–1040; these read DVFV…ISDT and QMYI…TIAN. N-linked (GlcNAc...) asparagine glycans are attached at residues asparagine 1000, asparagine 1006, and asparagine 1126. A helical membrane pass occupies residues 1170-1190; that stretch reads LWAIVLIGLAIALVLTFLLVV. Topologically, residues 1191-1327 are cytoplasmic; it reads AGILLEWYRN…VFDTILACSS (137 aa).

It belongs to the RAX2 family.

It is found in the cell membrane. Has been identified within the cluster that mediates the biosynthesis of squalestatin, but as its expression does not follow that of the other cluster members and it is not conserved in close related clusters, L1 seems not to be involved in the biosynthesis of squalestatin. Probably plays a role as a cell polarity regulator. This is Polarized growth protein L1 from Phoma sp. (strain ATCC 20986 / MF5453).